A 287-amino-acid chain; its full sequence is Kit ligand (287 aa).

A signal peptide spans methionine 1–threonine 25. Topologically, residues glutamine 26–glutamine 225 are extracellular. 2 cysteine pairs are disulfide-bonded: cysteine 29–cysteine 117 and cysteine 68–cysteine 167. 6 N-linked (GlcNAc...) asparagine glycosylation sites follow: asparagine 100, asparagine 106, asparagine 149, asparagine 178, asparagine 200, and asparagine 206. Residues glycine 226 to isoleucine 246 traverse the membrane as a helical segment. Over tyrosine 247–valine 287 the chain is Cytoplasmic.

The protein belongs to the SCF family. In terms of assembly, homodimer, non-covalently linked. Post-translationally, a soluble form is produced by proteolytic processing of isoform 1 in the extracellular domain.

The protein resides in the cell membrane. The protein localises to the secreted. Its subcellular location is the cytoplasm. It localises to the cytoskeleton. It is found in the cell projection. The protein resides in the lamellipodium. The protein localises to the filopodium. Functionally, ligand for the receptor-type protein-tyrosine kinase KIT. Plays an essential role in the regulation of cell survival and proliferation, hematopoiesis, stem cell maintenance, gametogenesis, mast cell development, migration and function, and in melanogenesis. KITLG/SCF binding can activate several signaling pathways. Acts synergistically with other cytokines, probably interleukins. The chain is Kit ligand (KITLG) from Coturnix japonica (Japanese quail).